Consider the following 175-residue polypeptide: Large ribosomal subunit protein uL10 (175 aa).

Belongs to the universal ribosomal protein uL10 family. Part of the ribosomal stalk of the 50S ribosomal subunit. The N-terminus interacts with L11 and the large rRNA to form the base of the stalk. The C-terminus forms an elongated spine to which L12 dimers bind in a sequential fashion forming a multimeric L10(L12)X complex.

Its function is as follows. Forms part of the ribosomal stalk, playing a central role in the interaction of the ribosome with GTP-bound translation factors. In Synechococcus sp. (strain CC9902), this protein is Large ribosomal subunit protein uL10.